Here is a 230-residue protein sequence, read N- to C-terminus: Transcriptional regulatory protein CitT (230 aa).

The Response regulatory domain occupies 6 to 124; the sequence is KVLIIEDDFR…VLHQRLDAYV (119 aa). D59 is modified (4-aspartylphosphate). The H-T-H motif DNA-binding region spans 184-203; that stretch reads AMEGARLIGASRSTVRRYFE.

Post-translationally, phosphorylated by CitS.

The protein resides in the cytoplasm. In terms of biological role, member of the two-component regulatory system CitT/CitS. This chain is Transcriptional regulatory protein CitT (citT), found in Halalkalibacterium halodurans (strain ATCC BAA-125 / DSM 18197 / FERM 7344 / JCM 9153 / C-125) (Bacillus halodurans).